The following is a 782-amino-acid chain: HHIP-like protein 1 (782 aa).

Residues 1–19 (MARARAGALLALWVLGAAA) form the signal peptide. 4 cysteine pairs are disulfide-bonded: C181–C521, C185–C528, C399–C417, and C484–C584. N234 carries N-linked (GlcNAc...) asparagine glycosylation. Residues 604 to 666 (EKFIPKTRST…RRGRLNSASR (63 aa)) form a disordered region. Residues 610-623 (TRSTPRPTARAPTR) show a composition bias toward low complexity. Residues 632–642 (AAPPAPTPRPA) show a composition bias toward pro residues. Positions 673–776 (VRLVRPAGLS…HDEDAGVVCS (104 aa)) constitute an SRCR domain. 3 disulfides stabilise this stretch: C700/C765, C713/C775, and C745/C755.

This sequence belongs to the HHIP family.

It is found in the secreted. In Homo sapiens (Human), this protein is HHIP-like protein 1 (HHIPL1).